The sequence spans 269 residues: Enoyl-[acyl-carrier-protein] reductase [NADH] (269 aa).

NAD(+)-binding positions include 20–21, 64–65, and 95–96; these read SI, DV, and IG. A substrate-binding site is contributed by tyrosine 158. The NAD(+) site is built by lysine 165 and isoleucine 194. Threonine 266 is modified (phosphothreonine).

It belongs to the short-chain dehydrogenases/reductases (SDR) family. FabI subfamily. Homodimer. Homotetramer. Is phosphorylated in vivo. Phosphorylation on Thr-266 decreases enzymatic activity.

It is found in the secreted. It localises to the cell wall. It carries out the reaction a 2,3-saturated acyl-[ACP] + NAD(+) = a (2E)-enoyl-[ACP] + NADH + H(+). The enzyme catalyses a 2,3-saturated acyl-CoA + NAD(+) = a (2E)-enoyl-CoA + NADH + H(+). It catalyses the reaction (2E)-octenoyl-CoA + NADH + H(+) = octanoyl-CoA + NAD(+). The catalysed reaction is (2E)-dodecenoyl-CoA + NADH + H(+) = dodecanoyl-CoA + NAD(+). It participates in lipid metabolism; mycolic acid biosynthesis. InhA activity is controlled via phosphorylation: phosphorylation on Thr-266 decreases InhA activity and likely negatively regulates biosynthesis of mycolic acids and growth of the bacterium. InhA activity is likely inhibited by activated isoniazid, hexadecynoyl-CoA and octadecynoyl-CoA, which also block the biosynthesis of mycolic acids. The antitubercular pro-drug isoniazid (INH) is oxidatively activated by the catalase-peroxidase KatG and then covalently binds NAD to form an adduct that inhibits the activity of InhA. The inhibitory adduct is the isonicotinic-acyl-NADH where the isonicotinic-acyl group replaces the 4S (and not the 4R) hydrogen of NADH. Similarly, the antitubercular pro-drugs ethionamide (ETH) and prothionamide (PTH) are activated by the flavoprotein monooxygenase EthA, and forms an adduct with NAD (ETH-NAD and PTH-NAD, respectively) that is a tight-binding inhibitor of InhA. Functionally, enoyl-ACP reductase of the type II fatty acid syntase (FAS-II) system, which is involved in the biosynthesis of mycolic acids, a major component of mycobacterial cell walls. Catalyzes the NADH-dependent reduction of the double bond of 2-trans-enoyl-[acyl-carrier protein], an essential step in the fatty acid elongation cycle of the FAS-II pathway. Shows preference for long-chain fatty acyl thioester substrates (&gt;C16), and can also use 2-trans-enoyl-CoAs as alternative substrates. The mycobacterial FAS-II system utilizes the products of the FAS-I system as primers to extend fatty acyl chain lengths up to C56, forming the meromycolate chain that serves as the precursor for final mycolic acids. Its function is as follows. Is the primary target of the first-line antitubercular drug isoniazid (INH) and of the second-line drug ethionamide (ETH). Overexpressed inhA confers INH and ETH resistance to M.smegmatis. The mechanism of isoniazid action against InhA is covalent attachment of the activated form of the drug to the nicotinamide ring of NAD and binding of the INH-NAD adduct to the active site of InhA. Similarly, the ETH-NAD adduct binds InhA. This chain is Enoyl-[acyl-carrier-protein] reductase [NADH], found in Mycolicibacterium smegmatis (strain ATCC 700084 / mc(2)155) (Mycobacterium smegmatis).